We begin with the raw amino-acid sequence, 436 residues long: Xylose isomerase (436 aa).

Active-site residues include His-100 and Asp-103. Positions 231, 267, 270, 295, 306, 308, and 338 each coordinate Mg(2+).

Belongs to the xylose isomerase family. Homotetramer. Mg(2+) is required as a cofactor.

The protein resides in the cytoplasm. The catalysed reaction is alpha-D-xylose = alpha-D-xylulofuranose. In Rhizobium etli (strain CIAT 652), this protein is Xylose isomerase.